A 69-amino-acid polypeptide reads, in one-letter code: MRQNTMTIIFIVFIVTFASLTIYGAEASEANFLERRADCLAHLKLCKKNKDCCSKKCSRRGTNPEQRCR.

A signal peptide spans 1–27 (MRQNTMTIIFIVFIVTFASLTIYGAEA). Residues 28-36 (SEANFLERR) constitute a propeptide that is removed on maturation. 3 cysteine pairs are disulfide-bonded: C39–C53, C46–C57, and C52–C68. Residues 59 to 60 (RR) form an essential for stimulation of [3H]ryanodine binding to RYR1 region.

This sequence belongs to the scorpion calcin family. In terms of tissue distribution, expressed by the venom gland.

It localises to the secreted. This toxin stabilizes ryanodine receptor 1 (RyR1) opening in a long-lasting subconductance state (55% of the full conductance state). Furthermore, it triggers calcium release from sarcoplasmic vesicles (45.3 nM are enough to induce a sharp release, and 50% of the total calcium is released after toxin (100 nM) addition) probably by acting as a cell-penetrating peptide (CPP). In addition, it has been shown to dose-dependently stimulate ryanodine binding to RyR1 (EC(50)=17.4 nM). It also augments the bell-shaped calcium-[3H]ryanodine binding curve that is maximal at about 10 uM calcium concentration. It binds a different site as ryanodine. It acts synergistically with caffeine. In vivo, intracerebroventricular injection into mice induces neurotoxic symptoms, followed by death. This Thorellius intrepidus (Scorpion) protein is Intrepicalcin.